The following is a 307-amino-acid chain: Capsid assembly scaffolding protein (307 aa).

Composition is skewed to acidic residues over residues 45–54 and 83–101; these read IELASDEVET and EPTD…EGSE. The interval 45 to 105 is disordered; it reads IELASDEVET…GTEGSEEFTP (61 aa).

It belongs to the T7likevirus capsid assembly scaffolding protein family.

Scaffolding protein involved in the icosahedric procapsid assembly. Coassembles with the capsid proteins to form the procapsid, in which the scaffolding protein is found within the external shell of icosahedrally arranged capsid protein subunits. In a subsequent step the scaffolding protein molecules are released from the procapsid. Facilitates assembly by binding to gp10 hexamers but not the pentamers and locking them into a morphogenically correct conformation. The polypeptide is Capsid assembly scaffolding protein (Escherichia coli (Bacteriophage T7)).